The primary structure comprises 308 residues: 1,4-dihydroxy-2-naphthoate octaprenyltransferase (308 aa).

Topologically, residues 1–20 (MTEQQISRTQAWLESLRPKT) are cytoplasmic. The helical transmembrane segment at 21–41 (LPLAFAAIIVGTALAWWQGHF) threads the bilayer. Residue aspartate 42 is a topological domain, periplasmic. The helical transmembrane segment at 43–63 (PLVALLALITAGLLQILSNLA) threads the bilayer. Residues 64–97 (NDYGDAVKGSDKPDRIGPLRGMQKGVITQQEMKR) are Cytoplasmic-facing. Residues 98–118 (ALIITVVLICLSGLALVAVAC) traverse the membrane as a helical segment. Over 119–123 (HTLAD) the chain is Periplasmic. Residues 124–144 (FVGFLILGGLSIIAAITYTVG) traverse the membrane as a helical segment. Residues 145 to 148 (NRPY) lie on the Cytoplasmic side of the membrane. A helical transmembrane segment spans residues 149–169 (GYIGLGDISVLVFFGWLSVMG). Residues 170-176 (SWYLQAH) lie on the Periplasmic side of the membrane. A helical membrane pass occupies residues 177–197 (TLIPALILPATACGLLATAVL). At 198–227 (NINNLRDINSDRENGKNTLVVRLGEVNARR) the chain is on the cytoplasmic side. The helical transmembrane segment at 228 to 247 (YHACLLMGSLVCLALFNLFS) threads the bilayer. The Periplasmic segment spans residues 248-250 (LHS). The chain crosses the membrane as a helical span at residues 251 to 270 (LWGWLFLLAAPLLVKQARYV). At 271 to 286 (MREMDPVAMRPMLERT) the chain is on the cytoplasmic side. The chain crosses the membrane as a helical span at residues 287–307 (VKGALLTNLLFVLGIFLSQWA). Alanine 308 is a topological domain (periplasmic).

It belongs to the MenA family. Type 1 subfamily.

Its subcellular location is the cell inner membrane. The enzyme catalyses an all-trans-polyprenyl diphosphate + 1,4-dihydroxy-2-naphthoate + H(+) = a 2-demethylmenaquinol + CO2 + diphosphate. Its pathway is quinol/quinone metabolism; menaquinone biosynthesis; menaquinol from 1,4-dihydroxy-2-naphthoate: step 1/2. Conversion of 1,4-dihydroxy-2-naphthoate (DHNA) to demethylmenaquinone (DMK). Attaches octaprenylpyrophosphate, a membrane-bound 40-carbon side chain to DHNA. The conversion of DHNA to DMK proceeds in three stages: the removal of the carboxyl group of DHNA as CO(2), the attachment of the isoprenoid side chain, and a quinol-to-quinone oxidation, which is thought to be spontaneous. The protein is 1,4-dihydroxy-2-naphthoate octaprenyltransferase of Escherichia coli (strain K12).